The primary structure comprises 182 residues: Probable pyruvoyl-dependent arginine decarboxylase (182 aa).

Residue Ser43 is modified to Pyruvic acid (Ser).

The protein belongs to the PdaD family. Requires pyruvate as cofactor.

The catalysed reaction is L-arginine + H(+) = agmatine + CO2. This chain is Probable pyruvoyl-dependent arginine decarboxylase, found in Chloroherpeton thalassium (strain ATCC 35110 / GB-78).